A 349-amino-acid polypeptide reads, in one-letter code: Phenylalanine--tRNA ligase alpha subunit (349 aa).

Position 258 (E258) interacts with Mg(2+).

Belongs to the class-II aminoacyl-tRNA synthetase family. Phe-tRNA synthetase alpha subunit type 1 subfamily. In terms of assembly, tetramer of two alpha and two beta subunits. It depends on Mg(2+) as a cofactor.

It localises to the cytoplasm. It catalyses the reaction tRNA(Phe) + L-phenylalanine + ATP = L-phenylalanyl-tRNA(Phe) + AMP + diphosphate + H(+). This is Phenylalanine--tRNA ligase alpha subunit from Rickettsia rickettsii (strain Sheila Smith).